The primary structure comprises 293 residues: ELMO domain-containing protein 2 (293 aa).

Residues 126–282 (QHEKMLLKLW…KFHERIKGLL (157 aa)) form the ELMO domain.

Acts as a GTPase-activating protein (GAP) toward guanine nucleotide exchange factors like ARL2, ARL3, ARF1 and ARF6, but not for GTPases outside the Arf family. The sequence is that of ELMO domain-containing protein 2 (Elmod2) from Mus musculus (Mouse).